Consider the following 403-residue polypeptide: SAIPRGLLLLAGLCCLVFGIMAEDAQVAQGPSQQIPRSLAHFAHSMYRVLTQQSNTSNIFFSPVSIATALAMVSLGAKGDTHTQILWGLEFNLTEIAEADIHDGFQNLLHTLNRPHSEHELTTGNGLFLDQKLKLKEKFSEDVKTLYHAEAFPTNFSNPKEAEKQINAYVEKGTQGKIVDLVKDLSADTVLALVNYIFFRGKWEKPFDVKHTTQEDFLVDMNTTVNVPMMKRQGMYKAFHCSTIQSWVLLLDYEGNVTTLFLLPDKGKMQHLEETLTPELIFKFARKTERMFANVHLPKLSISGTYDLKEVLGHLGITNVFSGAADLSGITEDMPLKISKGLHKALLTIDEKGTEAAGATELEITPHSVPQDLFFNKPFLFLIIDHSTDTPLFVGKVMDPTKK.

The first 22 residues, 1–22, serve as a signal peptide directing secretion; sequence SAIPRGLLLLAGLCCLVFGIMA. N-linked (GlcNAc...) asparagine glycosylation is found at Asn-55, Asn-92, Asn-155, Asn-222, and Asn-256. Residues 358 to 377 are RCL; it reads GATELEITPHSVPQDLFFNK.

This sequence belongs to the serpin family.

The protein resides in the secreted. In terms of biological role, inhibits elastase, chymotrypsin, cathepsin G, plasmin, and trypsin. The protein is Alpha-1-antiproteinase F of Cavia porcellus (Guinea pig).